Consider the following 285-residue polypeptide: Release factor glutamine methyltransferase (285 aa).

S-adenosyl-L-methionine-binding positions include 124 to 128 (GTGSG), aspartate 147, and asparagine 190. A substrate-binding site is contributed by 190 to 193 (NPPY).

This sequence belongs to the protein N5-glutamine methyltransferase family. PrmC subfamily.

The catalysed reaction is L-glutaminyl-[peptide chain release factor] + S-adenosyl-L-methionine = N(5)-methyl-L-glutaminyl-[peptide chain release factor] + S-adenosyl-L-homocysteine + H(+). Functionally, methylates the class 1 translation termination release factors RF1/PrfA and RF2/PrfB on the glutamine residue of the universally conserved GGQ motif. In Flavobacterium psychrophilum (strain ATCC 49511 / DSM 21280 / CIP 103535 / JIP02/86), this protein is Release factor glutamine methyltransferase.